The chain runs to 160 residues: Cyclic di-GMP-binding protein Smlt4090 (160 aa).

Lys-33, Lys-132, Arg-134, Asp-135, and Asp-160 together coordinate 3',3'-c-di-GMP.

It belongs to the YajQ family.

Functionally, cyclic di-GMP effector that significantly contributes to virulence. Binds bis-(3',5')-cyclic diguanylate (cyclic di-GMP or c-di-GMP), an important bacterial second messenger that controls a wide range of cellular processes. This chain is Cyclic di-GMP-binding protein Smlt4090, found in Stenotrophomonas maltophilia (strain K279a).